Reading from the N-terminus, the 204-residue chain is Large ribosomal subunit protein uL4 (204 aa).

A disordered region spans residues Thr-49 to Ser-75.

This sequence belongs to the universal ribosomal protein uL4 family. In terms of assembly, part of the 50S ribosomal subunit.

In terms of biological role, one of the primary rRNA binding proteins, this protein initially binds near the 5'-end of the 23S rRNA. It is important during the early stages of 50S assembly. It makes multiple contacts with different domains of the 23S rRNA in the assembled 50S subunit and ribosome. Functionally, forms part of the polypeptide exit tunnel. The protein is Large ribosomal subunit protein uL4 of Campylobacter jejuni subsp. jejuni serotype O:23/36 (strain 81-176).